Reading from the N-terminus, the 74-residue chain is ATP synthase subunit c (74 aa).

A run of 2 helical transmembrane segments spans residues 8 to 28 (FIGT…VSNI) and 52 to 72 (IGAG…MLLI).

This sequence belongs to the ATPase C chain family. In terms of assembly, F-type ATPases have 2 components, F(1) - the catalytic core - and F(0) - the membrane proton channel. F(1) has five subunits: alpha(3), beta(3), gamma(1), delta(1), epsilon(1). F(0) has three main subunits: a(1), b(2) and c(10-14). The alpha and beta chains form an alternating ring which encloses part of the gamma chain. F(1) is attached to F(0) by a central stalk formed by the gamma and epsilon chains, while a peripheral stalk is formed by the delta and b chains.

The protein localises to the cell inner membrane. Its function is as follows. F(1)F(0) ATP synthase produces ATP from ADP in the presence of a proton or sodium gradient. F-type ATPases consist of two structural domains, F(1) containing the extramembraneous catalytic core and F(0) containing the membrane proton channel, linked together by a central stalk and a peripheral stalk. During catalysis, ATP synthesis in the catalytic domain of F(1) is coupled via a rotary mechanism of the central stalk subunits to proton translocation. Functionally, key component of the F(0) channel; it plays a direct role in translocation across the membrane. A homomeric c-ring of between 10-14 subunits forms the central stalk rotor element with the F(1) delta and epsilon subunits. The polypeptide is ATP synthase subunit c (Rickettsia conorii (strain ATCC VR-613 / Malish 7)).